Consider the following 308-residue polypeptide: Ribosomal protein L11 methyltransferase (308 aa).

S-adenosyl-L-methionine-binding residues include T157, G178, D200, and N243.

It belongs to the methyltransferase superfamily. PrmA family.

The protein localises to the cytoplasm. The catalysed reaction is L-lysyl-[protein] + 3 S-adenosyl-L-methionine = N(6),N(6),N(6)-trimethyl-L-lysyl-[protein] + 3 S-adenosyl-L-homocysteine + 3 H(+). Methylates ribosomal protein L11. This is Ribosomal protein L11 methyltransferase from Desulforamulus reducens (strain ATCC BAA-1160 / DSM 100696 / MI-1) (Desulfotomaculum reducens).